The chain runs to 1354 residues: Rho-associated protein kinase 1 (1354 aa).

An N-acetylserine modification is found at serine 2. A Protein kinase domain is found at 76–338; that stretch reads YEVVKVIGRG…VEEIKRHLFF (263 aa). ATP-binding positions include 82-90 and lysine 105; that span reads IGRGAFGEV. Aspartate 198 serves as the catalytic Proton acceptor. The AGC-kinase C-terminal domain maps to 341–409; that stretch reads DQWAWETLRD…YSNRRYLSSA (69 aa). Residues 368–727 are interaction with FHOD1; that stretch reads FDDLEEDKGE…KKLKEEREAR (360 aa). A coiled-coil region spans residues 422 to 692; it reads KSLQESLQKT…RLEQEVNEHK (271 aa). An REM-1 domain is found at 479–556; that stretch reads STVSQIEKEK…LEEANDLLRT (78 aa). At lysine 647 the chain carries N6-acetyllysine. The SHROOM3 binding stretch occupies residues 707–946; it reads EAKSVAMCEM…TVSRLEEANS (240 aa). Positions 949–1015 constitute a RhoBD domain; that stretch reads TKDIEILRRE…LAEIMNRKDF (67 aa). An RHOA binding region spans residues 998–1010; that stretch reads LKTQAVNKLAEIM. Residues 1011–1102 are a coiled coil; that stretch reads NRKDFKIDRK…KLLDLSDSTS (92 aa). Residues serine 1105 and serine 1108 each carry the phosphoserine modification. The interval 1115–1354 is auto-inhibitory; the sequence is NLPESRIEGW…VVKNTSGKTS (240 aa). The region spanning 1118–1317 is the PH domain; the sequence is ESRIEGWLSV…WVTHLVKKIP (200 aa). Residues 1228-1281 form a Phorbol-ester/DAG-type zinc finger; that stretch reads GHEFIPTLYHFPANCDACAKPLWHVFKPPPALECRRCHVKCHRDHLDKKEDLIC. Positions 1320-1354 are disordered; sequence PPSGFVRASPRTLSTRSTANQSFRKVVKNTSGKTS. Serine 1328 is modified (phosphoserine). Over residues 1330 to 1354 the composition is skewed to polar residues; that stretch reads RTLSTRSTANQSFRKVVKNTSGKTS.

Belongs to the protein kinase superfamily. AGC Ser/Thr protein kinase family. In terms of assembly, homodimer. Interacts with RHOB, RHOC, MYLC2B and PTEN. Interacts with ITGB1BP1 (via N-terminus and PTB domain). Interacts with RHOA (activated by GTP), CHORDC1, DAPK3, GEM, JIP3, RHOE, PPP1R12A, PFN1, LIMK1, LIMK2 and TSG101. Interacts with FHOD1 in a Src-dependent manner. Interacts with SHROOM3. Mg(2+) serves as cofactor. Autophosphorylated on serine and threonine residues. In terms of processing, cleaved by caspase-3 during apoptosis. This leads to constitutive activation of the kinase and membrane blebbing. As to expression, detected in blood platelets.

The protein localises to the cytoplasm. It localises to the cytoskeleton. It is found in the microtubule organizing center. Its subcellular location is the centrosome. The protein resides in the centriole. The protein localises to the golgi apparatus membrane. It localises to the cell projection. It is found in the bleb. Its subcellular location is the cell membrane. The protein resides in the lamellipodium. The protein localises to the ruffle. It catalyses the reaction L-seryl-[protein] + ATP = O-phospho-L-seryl-[protein] + ADP + H(+). It carries out the reaction L-threonyl-[protein] + ATP = O-phospho-L-threonyl-[protein] + ADP + H(+). Activated by RHOA binding. Inhibited by Y-27632. Its function is as follows. Protein kinase which is a key regulator of the actin cytoskeleton and cell polarity. Involved in regulation of smooth muscle contraction, actin cytoskeleton organization, stress fiber and focal adhesion formation, neurite retraction, cell adhesion and motility via phosphorylation of DAPK3, GFAP, LIMK1, LIMK2, MYL9/MLC2, TPPP, PFN1 and PPP1R12A. Phosphorylates FHOD1 and acts synergistically with it to promote SRC-dependent non-apoptotic plasma membrane blebbing. Phosphorylates JIP3 and regulates the recruitment of JNK to JIP3 upon UVB-induced stress. Acts as a suppressor of inflammatory cell migration by regulating PTEN phosphorylation and stability. Acts as a negative regulator of VEGF-induced angiogenic endothelial cell activation. Required for centrosome positioning and centrosome-dependent exit from mitosis. Plays a role in terminal erythroid differentiation. Inhibits podocyte motility via regulation of actin cytoskeletal dynamics and phosphorylation of CFL1. Promotes keratinocyte terminal differentiation. Involved in osteoblast compaction through the fibronectin fibrillogenesis cell-mediated matrix assembly process, essential for osteoblast mineralization. May regulate closure of the eyelids and ventral body wall by inducing the assembly of actomyosin bundles. This Homo sapiens (Human) protein is Rho-associated protein kinase 1 (ROCK1).